Reading from the N-terminus, the 195-residue chain is Protease (195 aa).

Positions 71 to 149 (ALMLVDTGAE…DKWQILGRDV (79 aa)) constitute a Peptidase A2 domain. Asp76 is an active-site residue.

This chain is Protease, found in Bos taurus (Bovine).